The following is a 326-amino-acid chain: Biotin synthase (326 aa).

Residues 40-264 enclose the Radical SAM core domain; that stretch reads GQVQACTLVS…VLPRSYVRLA (225 aa). Residues Cys-55, Cys-59, and Cys-62 each contribute to the [4Fe-4S] cluster site. 4 residues coordinate [2Fe-2S] cluster: Cys-99, Cys-130, Cys-190, and Arg-262.

It belongs to the radical SAM superfamily. Biotin synthase family. As to quaternary structure, homodimer. [4Fe-4S] cluster serves as cofactor. [2Fe-2S] cluster is required as a cofactor.

The catalysed reaction is (4R,5S)-dethiobiotin + (sulfur carrier)-SH + 2 reduced [2Fe-2S]-[ferredoxin] + 2 S-adenosyl-L-methionine = (sulfur carrier)-H + biotin + 2 5'-deoxyadenosine + 2 L-methionine + 2 oxidized [2Fe-2S]-[ferredoxin]. Its pathway is cofactor biosynthesis; biotin biosynthesis; biotin from 7,8-diaminononanoate: step 2/2. In terms of biological role, catalyzes the conversion of dethiobiotin (DTB) to biotin by the insertion of a sulfur atom into dethiobiotin via a radical-based mechanism. The polypeptide is Biotin synthase (Halorhodospira halophila (strain DSM 244 / SL1) (Ectothiorhodospira halophila (strain DSM 244 / SL1))).